A 457-amino-acid chain; its full sequence is Protein translocase subunit SecY (457 aa).

The next 10 membrane-spanning stretches (helical) occupy residues 17-37, 75-95, 120-140, 163-183, 195-215, 230-250, 287-307, 326-346, 386-406, and 412-432; these read IFFT…PVPG, IALG…LVVF, LFTL…ALRM, VFYL…MWIG, ISLI…GSIF, IVSL…TVLI, VIPV…GQFL, VVYS…WTAT, LLGA…GRIL, and VSYF…LDTM.

This sequence belongs to the SecY/SEC61-alpha family. Component of the Sec protein translocase complex. Heterotrimer consisting of SecY, SecE and SecG subunits. The heterotrimers can form oligomers, although 1 heterotrimer is thought to be able to translocate proteins. Interacts with the ribosome. Interacts with SecDF, and other proteins may be involved. Interacts with SecA.

The protein localises to the cell inner membrane. The central subunit of the protein translocation channel SecYEG. Consists of two halves formed by TMs 1-5 and 6-10. These two domains form a lateral gate at the front which open onto the bilayer between TMs 2 and 7, and are clamped together by SecE at the back. The channel is closed by both a pore ring composed of hydrophobic SecY resides and a short helix (helix 2A) on the extracellular side of the membrane which forms a plug. The plug probably moves laterally to allow the channel to open. The ring and the pore may move independently. This Chlamydia muridarum (strain MoPn / Nigg) protein is Protein translocase subunit SecY.